The sequence spans 87 residues: Small ribosomal subunit protein uS17 (87 aa).

The protein belongs to the universal ribosomal protein uS17 family. Part of the 30S ribosomal subunit.

Its function is as follows. One of the primary rRNA binding proteins, it binds specifically to the 5'-end of 16S ribosomal RNA. In Lacticaseibacillus casei (strain BL23) (Lactobacillus casei), this protein is Small ribosomal subunit protein uS17.